A 149-amino-acid chain; its full sequence is Deoxyuridine 5'-triphosphate nucleotidohydrolase (149 aa).

Residues 68 to 70 (RSG), Asn-81, 85 to 87 (TID), and Lys-95 each bind substrate.

This sequence belongs to the dUTPase family. Mg(2+) serves as cofactor.

It carries out the reaction dUTP + H2O = dUMP + diphosphate + H(+). Its pathway is pyrimidine metabolism; dUMP biosynthesis; dUMP from dCTP (dUTP route): step 2/2. This enzyme is involved in nucleotide metabolism: it produces dUMP, the immediate precursor of thymidine nucleotides and it decreases the intracellular concentration of dUTP so that uracil cannot be incorporated into DNA. This Bdellovibrio bacteriovorus (strain ATCC 15356 / DSM 50701 / NCIMB 9529 / HD100) protein is Deoxyuridine 5'-triphosphate nucleotidohydrolase.